The following is a 235-amino-acid chain: Sugar fermentation stimulation protein homolog (235 aa).

The protein belongs to the SfsA family.

The sequence is that of Sugar fermentation stimulation protein homolog from Aliivibrio fischeri (strain MJ11) (Vibrio fischeri).